The chain runs to 227 residues: Transcriptional regulatory protein CusR (227 aa).

Positions 2–116 (KLLIVEDEKK…ELLARVRTLL (115 aa)) constitute a Response regulatory domain. Aspartate 51 carries the 4-aspartylphosphate modification. Residues 125–223 (ESQFQVADLM…VRGVGYMLEV (99 aa)) constitute a DNA-binding region (ompR/PhoB-type).

In terms of processing, phosphorylated by CusS.

Its subcellular location is the cytoplasm. In terms of biological role, member of the two-component regulatory system CusS/CusR involved in response to copper and silver. The sequence is that of Transcriptional regulatory protein CusR (cusR) from Escherichia coli O6:H1 (strain CFT073 / ATCC 700928 / UPEC).